A 174-amino-acid chain; its full sequence is Peptide methionine sulfoxide reductase MsrA (174 aa).

Cys-11 is a catalytic residue.

It belongs to the MsrA Met sulfoxide reductase family.

It catalyses the reaction L-methionyl-[protein] + [thioredoxin]-disulfide + H2O = L-methionyl-(S)-S-oxide-[protein] + [thioredoxin]-dithiol. The enzyme catalyses [thioredoxin]-disulfide + L-methionine + H2O = L-methionine (S)-S-oxide + [thioredoxin]-dithiol. Its function is as follows. Has an important function as a repair enzyme for proteins that have been inactivated by oxidation. Catalyzes the reversible oxidation-reduction of methionine sulfoxide in proteins to methionine. This chain is Peptide methionine sulfoxide reductase MsrA, found in Nitratiruptor sp. (strain SB155-2).